Consider the following 369-residue polypeptide: Septin-5 (369 aa).

Phosphothreonine is present on Thr13. One can recognise a Septin-type G domain in the interval 41 to 314 (KGFDFTLMVA…ENYRAHCIQQ (274 aa)). A G1 motif region spans residues 51-58 (GESGLGKS). GTP contacts are provided by residues 51-58 (GESGLGKS), Thr85, and Gly111. Residues 108–111 (DTPG) form a G3 motif region. Arg168 is modified (omega-N-methylarginine). Residues 189-192 (AKAD) are G4 motif. Position 190–198 (190–198 (KADCLVPSE)) interacts with GTP. A Phosphoserine modification is found at Ser225. Gly248 and Arg263 together coordinate GTP. A Phosphoserine modification is found at Ser327. Thr336 carries the phosphothreonine modification. The stretch at 338–369 (DSETEKLIRMKDEELRRMQEMLQKMKQRMQDQ) forms a coiled coil.

This sequence belongs to the TRAFAC class TrmE-Era-EngA-EngB-Septin-like GTPase superfamily. Septin GTPase family. As to quaternary structure, septins polymerize into heterooligomeric protein complexes that form filaments, and can associate with cellular membranes, actin filaments and microtubules. GTPase activity is required for filament formation. Interacts with SEPTIN2 and SEPTIN5. In platelets, associated with a complex containing STX4. Interacts with PRKN; this interaction leads to SEPTIN5 ubiquitination and degradation. Interacts with DYRK1A. Interacts with STX1A; in the cerebellar cortex. Post-translationally, phosphorylated by DYRK1A. Expressed in brain and testis and at lower level in heart, spleen, lung and kidney.

The protein resides in the cytoplasm. The protein localises to the cytoskeleton. In terms of biological role, filament-forming cytoskeletal GTPase. May play a role in cytokinesis (Potential). May play a role in platelet secretion. The polypeptide is Septin-5 (Rattus norvegicus (Rat)).